Here is a 297-residue protein sequence, read N- to C-terminus: MARLRLTIAYKGTDLHGWQVQEHATRPRPRTVQGVLEPIVSRMAGEQVRLHAAGRTDAGVHADGQVAHVDIPDHKLGVDWQKAINAQLPDDICILDVRRAADDFHARFDALGKRYTYRLWLTRRFIPPKLHGQVWATGPLDVYAMDRAARHLAGTHDFAAFQNQGTDVTSTVRTVHAIRRCPSGTLPAGALLTCSEPYTSWRCTGTHPDQPPATAGHPLAGIGLELVWSFEGDGFLKQMVRNMMGLLVAVGRGALAADDVPGIMATLDRSRAPATAPACGLTLSEVYYPPCDYPYAR.

Asp57 acts as the Nucleophile in catalysis. Tyr115 provides a ligand contact to substrate.

It belongs to the tRNA pseudouridine synthase TruA family. Homodimer.

It catalyses the reaction uridine(38/39/40) in tRNA = pseudouridine(38/39/40) in tRNA. In terms of biological role, formation of pseudouridine at positions 38, 39 and 40 in the anticodon stem and loop of transfer RNAs. This Nitratidesulfovibrio vulgaris (strain ATCC 29579 / DSM 644 / CCUG 34227 / NCIMB 8303 / VKM B-1760 / Hildenborough) (Desulfovibrio vulgaris) protein is tRNA pseudouridine synthase A.